Reading from the N-terminus, the 189-residue chain is Thioredoxin-like protein CITRX, chloroplastic (189 aa).

The N-terminal 56 residues, 1–56 (MAMAAAASLLPASAAPTLPGRAFRPPRNSTPTASLSCDGGSRCRGVGLGVILGGCR), are a transit peptide targeting the chloroplast. One can recognise a Thioredoxin domain in the interval 72 to 189 (GSGKYIAPDY…MIRNIIDNEL (118 aa)). Catalysis depends on nucleophile residues Cys-112 and Cys-115. Cys-112 and Cys-115 form a disulfide bridge.

Belongs to the thioredoxin family. Plant CITRX-type subfamily.

The protein resides in the plastid. It localises to the chloroplast. Probable thiol-disulfide oxidoreductase that may play a role in proper chloroplast development. In Oryza sativa subsp. japonica (Rice), this protein is Thioredoxin-like protein CITRX, chloroplastic.